Here is a 545-residue protein sequence, read N- to C-terminus: RAN GTPase-activating protein 2 (545 aa).

A WPP region spans residues 1–116 (MADILDSRPH…VAARELISED (116 aa)). LRR repeat units lie at residues 213-236 (GSIL…AFGA), 241-264 (LSSL…AVSE), 269-296 (TENL…VVKR), 325-348 (CTHM…SLSK), 353-380 (FKHM…ALKE), 382-405 (ASPI…AIAA), 410-433 (KQDL…QIAN), 439-462 (HSKL…ALAH), and 467-494 (KEAF…IFKK). The disordered stretch occupies residues 496-545 (PELLGALDENDPDGEEDDDDEEDEEDEENEGNGNGELESKLKNLEVNQED). Positions 503-525 (DENDPDGEEDDDDEEDEEDEENE) are enriched in acidic residues.

It belongs to the RNA1 family. As to quaternary structure, homodimer. Interacts with WIP1 and WIP2 through its WPP domain. Component of Ran complexes at least composed of WIT1 or WIT2, RANGAP1 or RANGAP2, and WIP1 or WIP2 or WIP3. Interacts with WIT1.

It is found in the cytoplasm. It localises to the nucleus membrane. The protein localises to the cytoskeleton. Its subcellular location is the spindle. The protein resides in the phragmoplast. Its function is as follows. GTPase activator for the nuclear Ras-related regulatory protein Ran, converting it to the putatively inactive GDP-bound state. The chain is RAN GTPase-activating protein 2 (RANGAP2) from Arabidopsis thaliana (Mouse-ear cress).